The primary structure comprises 563 residues: Serine carboxypeptidase S10 family member 2 (563 aa).

The N-terminal stretch at 1–23 (MNIKIILLSIILIIQLLLLNNNG) is a signal peptide. Residues 24–529 (GIVESKINFS…VPLTLGAWIG (506 aa)) lie on the Extracellular side of the membrane. Residues asparagine 31, asparagine 95, asparagine 110, and asparagine 213 are each glycosylated (N-linked (GlcNAc...) asparagine). Serine 225 is a catalytic residue. N-linked (GlcNAc...) asparagine glycans are attached at residues asparagine 244, asparagine 328, and asparagine 382. Aspartate 417 is an active-site residue. An N-linked (GlcNAc...) asparagine glycan is attached at asparagine 468. Histidine 479 is an active-site residue. N-linked (GlcNAc...) asparagine glycosylation occurs at asparagine 499. Residues 530–550 (ITVGGCAFGFLVGGLIIYIIM) form a helical membrane-spanning segment. Residues 551–563 (KKSSKNGYYKVIQ) are Cytoplasmic-facing.

The protein belongs to the peptidase S10 family.

It is found in the membrane. Its function is as follows. Probable carboxypeptidase. This Dictyostelium discoideum (Social amoeba) protein is Serine carboxypeptidase S10 family member 2.